A 316-amino-acid chain; its full sequence is Ribosomal RNA large subunit methyltransferase F (316 aa).

It belongs to the methyltransferase superfamily. METTL16/RlmF family.

The protein resides in the cytoplasm. It catalyses the reaction adenosine(1618) in 23S rRNA + S-adenosyl-L-methionine = N(6)-methyladenosine(1618) in 23S rRNA + S-adenosyl-L-homocysteine + H(+). Specifically methylates the adenine in position 1618 of 23S rRNA. The sequence is that of Ribosomal RNA large subunit methyltransferase F from Pseudomonas putida (strain GB-1).